The chain runs to 179 residues: Large ribosomal subunit protein uL10 (179 aa).

This sequence belongs to the universal ribosomal protein uL10 family. In terms of assembly, part of the ribosomal stalk of the 50S ribosomal subunit. The N-terminus interacts with L11 and the large rRNA to form the base of the stalk. The C-terminus forms an elongated spine to which L12 dimers bind in a sequential fashion forming a multimeric L10(L12)X complex.

In terms of biological role, forms part of the ribosomal stalk, playing a central role in the interaction of the ribosome with GTP-bound translation factors. The protein is Large ribosomal subunit protein uL10 of Mycolicibacterium vanbaalenii (strain DSM 7251 / JCM 13017 / BCRC 16820 / KCTC 9966 / NRRL B-24157 / PYR-1) (Mycobacterium vanbaalenii).